Reading from the N-terminus, the 215-residue chain is Urease accessory protein UreG (215 aa).

The disordered stretch occupies residues Met1–Gly21. Gly24–Thr31 contributes to the GTP binding site.

This sequence belongs to the SIMIBI class G3E GTPase family. UreG subfamily. Homodimer. UreD, UreF and UreG form a complex that acts as a GTP-hydrolysis-dependent molecular chaperone, activating the urease apoprotein by helping to assemble the nickel containing metallocenter of UreC. The UreE protein probably delivers the nickel.

The protein resides in the cytoplasm. Functionally, facilitates the functional incorporation of the urease nickel metallocenter. This process requires GTP hydrolysis, probably effectuated by UreG. The chain is Urease accessory protein UreG from Burkholderia vietnamiensis (strain G4 / LMG 22486) (Burkholderia cepacia (strain R1808)).